Reading from the N-terminus, the 738-residue chain is Flowering time control protein FCA (738 aa).

The tract at residues 1-118 is disordered; the sequence is MHRGGDRSTD…RGDHSDHDNR (118 aa). 2 stretches are compositionally biased toward gly residues: residues 52–70 and 81–98; these read RGGG…GGGR and SGGG…GEPG. The span at 109–118 shows a compositional bias: basic and acidic residues; that stretch reads RGDHSDHDNR. 2 RRM domains span residues 122–203 and 213–293; these read VKLF…YADG and HKLF…FADP. Disordered regions lie at residues 292–451 and 566–595; these read DPKR…PAQQ and QQSN…IIPS. Over residues 301–311 the composition is skewed to gly residues; that stretch reads SRGGPAFGGPG. The span at 342-358 shows a compositional bias: polar residues; it reads HPSSPRSAPHQFNNFGS. Residues 368–377 show a composition bias toward low complexity; the sequence is TVTSTTDTAT. The segment covering 383-401 has biased composition (polar residues); sequence FSGNGSLSSQTAVPSSSHM. Over residues 435–451 the composition is skewed to low complexity; the sequence is QLQNNQQGQPLQGPAQQ. Residues 575 to 595 are compositionally biased toward polar residues; it reads PTQGQPVQSSNPGAPNAIIPS. In terms of domain architecture, WW spans 609–642; that stretch reads VPLTCNWTEHTSPEGFKYYYNSITRESKWDKPEE. Residues 670 to 738 are disordered; sequence MQQLQSPPQA…QSAQERAWKS (69 aa). Over residues 683 to 706 the composition is skewed to low complexity; that stretch reads PAMQPVQQIPQAQQGQQQMQMKQQ. Polar residues predominate over residues 723 to 732; that stretch reads RIQQGIQSAQ.

As to quaternary structure, interacts with FY. Binds to SF1, FIK, RPRD1B, OsI_31983 and MADS8.

It is found in the nucleus. Functionally, plays a major role in the promotion of the transition of the vegetative meristem to reproductive development. Required for RNA-mediated chromatin silencing of a range of loci in the genome. Cotranscriptionally recognizes aberrant RNA and marks it for silencing. Controls alternative cleavage and polyadenylation on pre-mRNAs and antisense RNAs. Regulates flowering time, seed size and cell volume, probably via the modulation of cell size. The sequence is that of Flowering time control protein FCA from Oryza sativa subsp. indica (Rice).